The sequence spans 473 residues: Glutamate--tRNA ligase 2 (473 aa).

Positions 11-21 (PSPTGYLHIGG) match the 'HIGH' region motif. Residues 113-133 (KARAEGRPPRYDGRWRDRDPS) show a composition bias toward basic and acidic residues. Residues 113–136 (KARAEGRPPRYDGRWRDRDPSEAP) form a disordered region. The 'KMSKS' region motif lies at 240 to 244 (KLSKR). Residue Lys243 coordinates ATP.

It belongs to the class-I aminoacyl-tRNA synthetase family. Glutamate--tRNA ligase type 1 subfamily. As to quaternary structure, monomer.

It localises to the cytoplasm. The enzyme catalyses tRNA(Glu) + L-glutamate + ATP = L-glutamyl-tRNA(Glu) + AMP + diphosphate. In terms of biological role, catalyzes the attachment of glutamate to tRNA(Glu) in a two-step reaction: glutamate is first activated by ATP to form Glu-AMP and then transferred to the acceptor end of tRNA(Glu). The polypeptide is Glutamate--tRNA ligase 2 (Brucella suis biovar 1 (strain 1330)).